A 302-amino-acid polypeptide reads, in one-letter code: Sulfate adenylyltransferase subunit 2 (302 aa).

This sequence belongs to the PAPS reductase family. CysD subfamily. In terms of assembly, heterodimer composed of CysD, the smaller subunit, and CysN.

It catalyses the reaction sulfate + ATP + H(+) = adenosine 5'-phosphosulfate + diphosphate. Its pathway is sulfur metabolism; hydrogen sulfide biosynthesis; sulfite from sulfate: step 1/3. In terms of biological role, with CysN forms the ATP sulfurylase (ATPS) that catalyzes the adenylation of sulfate producing adenosine 5'-phosphosulfate (APS) and diphosphate, the first enzymatic step in sulfur assimilation pathway. APS synthesis involves the formation of a high-energy phosphoric-sulfuric acid anhydride bond driven by GTP hydrolysis by CysN coupled to ATP hydrolysis by CysD. This chain is Sulfate adenylyltransferase subunit 2, found in Klebsiella pneumoniae (strain 342).